We begin with the raw amino-acid sequence, 268 residues long: Nickel import ATP-binding protein NikE (268 aa).

Residues 4–252 (LNVCGLSHHY…SSDAGRVLQN (249 aa)) enclose the ABC transporter domain. 45–52 (GRSGCGKS) provides a ligand contact to ATP.

The protein belongs to the ABC transporter superfamily. Nickel importer (TC 3.A.1.5.3) family. In terms of assembly, the complex is composed of two ATP-binding proteins (NikD and NikE), two transmembrane proteins (NikB and NikC) and a solute-binding protein (NikA).

Its subcellular location is the cell inner membrane. It carries out the reaction Ni(2+)(out) + ATP + H2O = Ni(2+)(in) + ADP + phosphate + H(+). Its function is as follows. Part of the ABC transporter complex NikABCDE involved in nickel import. Responsible for energy coupling to the transport system. The sequence is that of Nickel import ATP-binding protein NikE from Shigella flexneri.